Here is a 475-residue protein sequence, read N- to C-terminus: Ornithine aminotransferase, mitochondrial (475 aa).

The transit peptide at 1–16 directs the protein to the mitochondrion; that stretch reads MAATTRRLLYYVSKRF. Positions 23-43 are disordered; sequence RSYGGLPQSNSKSPPSSSQRL. Residues 29–41 show a composition bias toward low complexity; the sequence is PQSNSKSPPSSSQ. Pyridoxal 5'-phosphate is bound by residues 142–143 and Phe-177; that span reads GA. An L-ornithine-binding site is contributed by Arg-180. 265 to 268 is a binding site for pyridoxal 5'-phosphate; sequence DEVQ. At Lys-294 the chain carries N6-(pyridoxal phosphate)lysine. Residue Ser-323 participates in L-ornithine binding. Residue Thr-324 coordinates pyridoxal 5'-phosphate.

The protein belongs to the class-III pyridoxal-phosphate-dependent aminotransferase family. As to quaternary structure, homotetramer. Pyridoxal 5'-phosphate is required as a cofactor.

It is found in the mitochondrion matrix. It carries out the reaction a 2-oxocarboxylate + L-ornithine = L-glutamate 5-semialdehyde + an L-alpha-amino acid. The protein operates within amino-acid biosynthesis; L-proline biosynthesis; L-glutamate 5-semialdehyde from L-ornithine: step 1/1. Functionally, mediates degradation of arginine for nitrogen recycling. Plays a role in non-host disease resistance by regulating pyrroline-5-carboxylate metabolism-induced hypersensitive response. This is Ornithine aminotransferase, mitochondrial from Arabidopsis thaliana (Mouse-ear cress).